The following is a 279-amino-acid chain: Nitrate import permease protein NrtB (279 aa).

Transmembrane regions (helical) follow at residues 25-45 (FLPYVVCLPIFLAIWQVISAI), 91-111 (VAIGYLLAACTGILVGGVLGM), 149-169 (AIFVIFITAIWPIIINTAVGI), 200-220 (VPYVFAGLRIAVGLAWLAIVA), and 249-269 (IILAIFYVGLVGLSLDRLVAW). The ABC transmembrane type-1 domain maps to 84–267 (ILISLQRVAI…LVGLSLDRLV (184 aa)).

Belongs to the binding-protein-dependent transport system permease family. CysTW subfamily. In terms of assembly, the complex is composed of two ATP-binding proteins (NrtC and NrtD), two transmembrane proteins (NrtB) and a solute-binding protein (NrtA).

The protein localises to the cell inner membrane. Its function is as follows. Part of the ABC transporter complex NrtABCD involved in nitrate uptake. The complex is probably also involved in nitrite transport. Probably responsible for the translocation of the substrate across the membrane. The sequence is that of Nitrate import permease protein NrtB from Synechococcus elongatus (strain ATCC 33912 / PCC 7942 / FACHB-805) (Anacystis nidulans R2).